The sequence spans 215 residues: ATP phosphoribosyltransferase (215 aa).

Belongs to the ATP phosphoribosyltransferase family. Short subfamily. In terms of assembly, heteromultimer composed of HisG and HisZ subunits.

The protein resides in the cytoplasm. The enzyme catalyses 1-(5-phospho-beta-D-ribosyl)-ATP + diphosphate = 5-phospho-alpha-D-ribose 1-diphosphate + ATP. Its pathway is amino-acid biosynthesis; L-histidine biosynthesis; L-histidine from 5-phospho-alpha-D-ribose 1-diphosphate: step 1/9. Catalyzes the condensation of ATP and 5-phosphoribose 1-diphosphate to form N'-(5'-phosphoribosyl)-ATP (PR-ATP). Has a crucial role in the pathway because the rate of histidine biosynthesis seems to be controlled primarily by regulation of HisG enzymatic activity. The protein is ATP phosphoribosyltransferase of Prochlorococcus marinus subsp. pastoris (strain CCMP1986 / NIES-2087 / MED4).